A 303-amino-acid chain; its full sequence is Heme A synthase (303 aa).

Residues 1 to 8 are Cytoplasmic-facing; the sequence is MFGKKNLK. A helical transmembrane segment spans residues 9–29; it reads WLGVVATLMMTFVQLGGALVT. The Extracellular segment spans residues 30 to 67; the sequence is KTGSADGCGSSWPLCHGALIPEFFPIDTIIELSHRAVS. The cysteines at positions 37 and 44 are disulfide-linked. Glu-60 is an active-site residue. Position 63 (His-63) interacts with heme o. The helical transmembrane segment at 68–88 threads the bilayer; it reads ALSLLMVLWLVITAWKHIGYI. Topologically, residues 89–93 are cytoplasmic; the sequence is KEIKP. Residues 94-114 traverse the membrane as a helical segment; it reads LSIISVGFLLLQALIGAAAVI. Residues 115 to 125 lie on the Extracellular side of the membrane; the sequence is WQQNDYVLALH. Residue His-125 coordinates heme o. A helical transmembrane segment spans residues 126-146; it reads FGISLISFSSVFLITLIIFSI. Residues 147–163 lie on the Cytoplasmic side of the membrane; it reads DQKYEADELYIKKPLRR. Residues 164 to 184 traverse the membrane as a helical segment; that stretch reads LTWLMAIIIYCGVYTGALVRH. Residues 185-215 are Extracellular-facing; sequence ADASLAYGGWPLPFHDLVPHSEQDWVQLTHR. His-214 provides a ligand contact to heme b. Residues 216–236 traverse the membrane as a helical segment; sequence IMAFIVFTIIMITYIHAVKNY. Residues 237-244 lie on the Cytoplasmic side of the membrane; sequence PNNRTVHY. Residues 245–265 traverse the membrane as a helical segment; that stretch reads GYTAAFILVILQVITGALSIM. Topologically, residues 266–270 are extracellular; that stretch reads TNVNL. The helical transmembrane segment at 271–291 threads the bilayer; that stretch reads IIALFHALFITYLFGMTTYFI. His-276 contributes to the heme b binding site. Over 292-303 the chain is Cytoplasmic; the sequence is MLMLRSVRSDKQ.

The protein belongs to the COX15/CtaA family. Type 1 subfamily. As to quaternary structure, interacts with CtaB. Requires heme b as cofactor.

The protein localises to the cell membrane. The catalysed reaction is Fe(II)-heme o + 2 A + H2O = Fe(II)-heme a + 2 AH2. It functions in the pathway porphyrin-containing compound metabolism; heme A biosynthesis; heme A from heme O: step 1/1. In terms of biological role, catalyzes the conversion of heme O to heme A by two successive hydroxylations of the methyl group at C8. The first hydroxylation forms heme I, the second hydroxylation results in an unstable dihydroxymethyl group, which spontaneously dehydrates, resulting in the formyl group of heme A. This Staphylococcus aureus (strain Mu3 / ATCC 700698) protein is Heme A synthase.